A 489-amino-acid chain; its full sequence is Glutamyl-tRNA(Gln) amidotransferase subunit A (489 aa).

Residues lysine 77 and serine 152 each act as charge relay system in the active site. Serine 176 serves as the catalytic Acyl-ester intermediate.

The protein belongs to the amidase family. GatA subfamily. Heterotrimer of A, B and C subunits.

The catalysed reaction is L-glutamyl-tRNA(Gln) + L-glutamine + ATP + H2O = L-glutaminyl-tRNA(Gln) + L-glutamate + ADP + phosphate + H(+). Its function is as follows. Allows the formation of correctly charged Gln-tRNA(Gln) through the transamidation of misacylated Glu-tRNA(Gln) in organisms which lack glutaminyl-tRNA synthetase. The reaction takes place in the presence of glutamine and ATP through an activated gamma-phospho-Glu-tRNA(Gln). This is Glutamyl-tRNA(Gln) amidotransferase subunit A from Protochlamydia amoebophila (strain UWE25).